We begin with the raw amino-acid sequence, 250 residues long: Adenosine 5'-phosphosulfate reductase (250 aa).

Residues Cys119, Cys120, Cys202, and Cys205 each coordinate [4Fe-4S] cluster. Cys230 serves as the catalytic Nucleophile; cysteine thiosulfonate intermediate.

It belongs to the PAPS reductase family. CysH subfamily. [4Fe-4S] cluster serves as cofactor.

It localises to the cytoplasm. The enzyme catalyses [thioredoxin]-disulfide + sulfite + AMP + 2 H(+) = adenosine 5'-phosphosulfate + [thioredoxin]-dithiol. It participates in sulfur metabolism; hydrogen sulfide biosynthesis; sulfite from sulfate. Catalyzes the formation of sulfite from adenosine 5'-phosphosulfate (APS) using thioredoxin as an electron donor. The protein is Adenosine 5'-phosphosulfate reductase of Burkholderia cepacia (Pseudomonas cepacia).